The sequence spans 271 residues: Metal-staphylopine import system ATP-binding protein CntD (271 aa).

The ABC transporter domain maps to 6-251 (VKHLTITDTW…PEHVYTKYLL (246 aa)). 38 to 45 (GESGSGKS) is a binding site for ATP.

Belongs to the ABC transporter superfamily. As to quaternary structure, the complex is composed of two ATP-binding proteins (CntD and CntF), two transmembrane proteins (CntB and CntC) and a solute-binding protein (CntA).

Its subcellular location is the cell membrane. Its function is as follows. Part of the ABC transporter complex CntABCDF (Opp1) involved in the uptake of metal in complex with the metallophore staphylopine (StP). May be involved in the import of a large array of divalent metals ions such as nickel, cobalt, zinc, copper and iron. Probably responsible for energy coupling to the transport system. The sequence is that of Metal-staphylopine import system ATP-binding protein CntD from Staphylococcus aureus (strain Mu50 / ATCC 700699).